Consider the following 150-residue polypeptide: Anthranilate synthase component 1 (150 aa).

S40 is an L-tryptophan binding site. R119 contributes to the chorismate binding site.

The protein belongs to the anthranilate synthase component I family. As to quaternary structure, heterotetramer consisting of two non-identical subunits: a beta subunit (TrpG) and a large alpha subunit (TrpE). Requires Mg(2+) as cofactor.

The enzyme catalyses chorismate + L-glutamine = anthranilate + pyruvate + L-glutamate + H(+). It participates in amino-acid biosynthesis; L-tryptophan biosynthesis; L-tryptophan from chorismate: step 1/5. Its activity is regulated as follows. Feedback inhibited by tryptophan. In terms of biological role, part of a heterotetrameric complex that catalyzes the two-step biosynthesis of anthranilate, an intermediate in the biosynthesis of L-tryptophan. In the first step, the glutamine-binding beta subunit (TrpG) of anthranilate synthase (AS) provides the glutamine amidotransferase activity which generates ammonia as a substrate that, along with chorismate, is used in the second step, catalyzed by the large alpha subunit of AS (TrpE) to produce anthranilate. In the absence of TrpG, TrpE can synthesize anthranilate directly from chorismate and high concentrations of ammonia. In Citrobacter freundii, this protein is Anthranilate synthase component 1 (trpE).